We begin with the raw amino-acid sequence, 285 residues long: Diaminopimelate epimerase (285 aa).

Residues asparagine 14 and asparagine 67 each coordinate substrate. Residue cysteine 76 is the Proton donor of the active site. Substrate contacts are provided by residues 77–78 (GN), asparagine 166, asparagine 199, and 217–218 (ER). Residue cysteine 226 is the Proton acceptor of the active site. 227–228 (GT) lines the substrate pocket.

Belongs to the diaminopimelate epimerase family. As to quaternary structure, homodimer.

The protein localises to the cytoplasm. The catalysed reaction is (2S,6S)-2,6-diaminopimelate = meso-2,6-diaminopimelate. It functions in the pathway amino-acid biosynthesis; L-lysine biosynthesis via DAP pathway; DL-2,6-diaminopimelate from LL-2,6-diaminopimelate: step 1/1. In terms of biological role, catalyzes the stereoinversion of LL-2,6-diaminopimelate (L,L-DAP) to meso-diaminopimelate (meso-DAP), a precursor of L-lysine and an essential component of the bacterial peptidoglycan. In Bacillus licheniformis (strain ATCC 14580 / DSM 13 / JCM 2505 / CCUG 7422 / NBRC 12200 / NCIMB 9375 / NCTC 10341 / NRRL NRS-1264 / Gibson 46), this protein is Diaminopimelate epimerase.